We begin with the raw amino-acid sequence, 855 residues long: DNA mismatch repair protein MutS (855 aa).

Position 621-628 (621-628 (GPNMGGKS)) interacts with ATP.

The protein belongs to the DNA mismatch repair MutS family.

In terms of biological role, this protein is involved in the repair of mismatches in DNA. It is possible that it carries out the mismatch recognition step. This protein has a weak ATPase activity. The sequence is that of DNA mismatch repair protein MutS from Francisella tularensis subsp. holarctica (strain OSU18).